Here is a 134-residue protein sequence, read N- to C-terminus: Protein NrdI (134 aa).

This sequence belongs to the NrdI family.

Its function is as follows. Probably involved in ribonucleotide reductase function. The polypeptide is Protein NrdI (Chromohalobacter salexigens (strain ATCC BAA-138 / DSM 3043 / CIP 106854 / NCIMB 13768 / 1H11)).